The primary structure comprises 291 residues: Taste receptor type 2 member 16 (291 aa).

A topological domain (extracellular) is located at residue M1. The chain crosses the membrane as a helical span at residues 2-22 (IPIQLTVFFMIIYVLESLTII). The Cytoplasmic segment spans residues 23–41 (VQSSLIVAVLGREWLQVRR). The helical transmembrane segment at 42–62 (LMPVDMILISLGISRFCLQWA) threads the bilayer. Residues 63–84 (SMLNNFCSYLNLNYVLCNLTIT) lie on the Extracellular side of the membrane. Residue N80 is glycosylated (N-linked (GlcNAc...) asparagine). A helical transmembrane segment spans residues 85–105 (WEFFNILTFWLNSLLTVFYCI). At 106 to 125 (KVSSFTHHIFLWVRWRILRW) the chain is on the cytoplasmic side. Residues 126 to 146 (FPWILLGSLTIACVTIIPSAI) traverse the membrane as a helical segment. The Extracellular segment spans residues 147-182 (GNYIQIQLLTMEHLPRNSTVTDRLEKFHQYQFQSHT). Residue N163 is glycosylated (N-linked (GlcNAc...) asparagine). The chain crosses the membrane as a helical span at residues 183 to 203 (VALVIPFILFLASTILLMASL). Residues 204 to 228 (TKQIQHHSTGHCNPSMKAHFTALRS) are Cytoplasmic-facing. The helical transmembrane segment at 229–249 (LAILFIVFTSYFLIILITIIG) threads the bilayer. The Extracellular segment spans residues 250–257 (TLFDKRCW). The helical transmembrane segment at 258-278 (LWVWEAFVYAFILMHSTSLML) threads the bilayer. Over 279 to 291 (SSPTLKRILKGKC) the chain is Cytoplasmic.

It belongs to the G-protein coupled receptor T2R family. As to quaternary structure, interacts with RTP3 and RTP4.

It localises to the cell membrane. Receptor that may play a role in the perception of bitterness and is gustducin-linked. May function as a bitter taste receptor for the phytonutrient beta glucopyranosides, some of which are toxic and some of which lower the risk of cancer and cardiovascular disease. The activity of this receptor may stimulate alpha gustducin, mediate PLC-beta-2 activation and lead to the gating of TRPM5. This is Taste receptor type 2 member 16 (TAS2R16) from Pongo pygmaeus (Bornean orangutan).